A 399-amino-acid chain; its full sequence is Beta sliding clamp (399 aa).

The protein belongs to the beta sliding clamp family. As to quaternary structure, forms a ring-shaped head-to-tail homodimer around DNA which binds and tethers DNA polymerases and other proteins to the DNA. The DNA replisome complex has a single clamp-loading complex (3 tau and 1 each of delta, delta', psi and chi subunits) which binds 3 Pol III cores (1 core on the leading strand and 2 on the lagging strand) each with a beta sliding clamp dimer. Additional proteins in the replisome are other copies of gamma, psi and chi, Ssb, DNA helicase and RNA primase.

It localises to the cytoplasm. Functionally, confers DNA tethering and processivity to DNA polymerases and other proteins. Acts as a clamp, forming a ring around DNA (a reaction catalyzed by the clamp-loading complex) which diffuses in an ATP-independent manner freely and bidirectionally along dsDNA. Initially characterized for its ability to contact the catalytic subunit of DNA polymerase III (Pol III), a complex, multichain enzyme responsible for most of the replicative synthesis in bacteria; Pol III exhibits 3'-5' exonuclease proofreading activity. The beta chain is required for initiation of replication as well as for processivity of DNA replication. This chain is Beta sliding clamp (dnaN), found in Mycobacterium leprae (strain TN).